The following is a 413-amino-acid chain: Gamma-glutamyl phosphate reductase (413 aa).

The protein belongs to the gamma-glutamyl phosphate reductase family.

The protein resides in the cytoplasm. It carries out the reaction L-glutamate 5-semialdehyde + phosphate + NADP(+) = L-glutamyl 5-phosphate + NADPH + H(+). It participates in amino-acid biosynthesis; L-proline biosynthesis; L-glutamate 5-semialdehyde from L-glutamate: step 2/2. Its function is as follows. Catalyzes the NADPH-dependent reduction of L-glutamate 5-phosphate into L-glutamate 5-semialdehyde and phosphate. The product spontaneously undergoes cyclization to form 1-pyrroline-5-carboxylate. This chain is Gamma-glutamyl phosphate reductase, found in Lactococcus lactis subsp. lactis (strain IL1403) (Streptococcus lactis).